The sequence spans 511 residues: MKKLKINYLLIGIVTLLLAAALWPSIPWSGKPENRVAGIIARGELRISTINSPMTFATMNNKAFGLDYELAKQFADYLGVTLKITVRQNISQLFDDLDDGQADMLAAGLVYNQERVKNYQAGPTYYSVSQQLVYRVGNTRPRTLAALTAEQLTIAPGHVAINDLQTLKAEKYPDLAWRVDEKRGTTALMQAVIDGKLDYTIADSVAVSLFQRVHPELAVALDITDEQPVTWFSARDDDNSLSAAMLDFFNNINEDGTLARLEEKYLGHGNDFDYVDTRTFLRAVENILPEVQPLFEKYAREIDWRLLAAIAWQESHWDPQATSPTGVRGMMMLTRNTAQSLGLTDRTDAAQSIDGGMRYLQDMMDKVPDSIPKDERIWFALAAYNMGYAHMLDAMALTRKQKGNPNSWADVKLRLPLLSQKPYYSKLKYGYARGHEAYAYVENIRKYQISLVGYLSEKERQQQQTLALAEDYPAVLPNELEQPQETTLPFFKFRADKQMDNARMKLPGHLY.

The N-terminal stretch at 1–19 is a signal peptide; that stretch reads MKKLKINYLLIGIVTLLLA. The non-LT domain stretch occupies residues 20-269; that stretch reads AALWPSIPWS…RLEEKYLGHG (250 aa). The tract at residues 270-511 is LT domain; the sequence is NDFDYVDTRT…ARMKLPGHLY (242 aa). E314 is a catalytic residue.

It in the N-terminal section; belongs to the bacterial solute-binding protein 3 family. This sequence in the C-terminal section; belongs to the transglycosylase Slt family.

The protein resides in the cell outer membrane. It carries out the reaction Exolytic cleavage of the (1-&gt;4)-beta-glycosidic linkage between N-acetylmuramic acid (MurNAc) and N-acetylglucosamine (GlcNAc) residues in peptidoglycan, from either the reducing or the non-reducing ends of the peptidoglycan chains, with concomitant formation of a 1,6-anhydrobond in the MurNAc residue.. Its function is as follows. Murein-degrading enzyme that degrades murein glycan strands and insoluble, high-molecular weight murein sacculi, with the concomitant formation of a 1,6-anhydromuramoyl product. Lytic transglycosylases (LTs) play an integral role in the metabolism of the peptidoglycan (PG) sacculus. Their lytic action creates space within the PG sacculus to allow for its expansion as well as for the insertion of various structures such as secretion systems and flagella. The chain is Membrane-bound lytic murein transglycosylase F from Klebsiella pneumoniae subsp. pneumoniae (strain ATCC 700721 / MGH 78578).